The following is a 159-amino-acid chain: Nucleotide-binding protein PSPPH_4093 (159 aa).

The protein belongs to the YajQ family.

In terms of biological role, nucleotide-binding protein. The sequence is that of Nucleotide-binding protein PSPPH_4093 from Pseudomonas savastanoi pv. phaseolicola (strain 1448A / Race 6) (Pseudomonas syringae pv. phaseolicola (strain 1448A / Race 6)).